A 216-amino-acid polypeptide reads, in one-letter code: MGSSRLAMRSALGLFFLLFVQISLALKFDIAAGKGERCIRNFVLKDQLVVVTAIVSGERGDGQMVNMHIKDSMGNDHGRPKDVIGETRQAFTSAGDTTFDVCFENTLVSRRGISNPHRSIELDVDIGADARDWSNIQAQEKLKPIETDLRRIEEIVAEVVSEMEYLRAREQKLRDTNESTNERVKWFAFGTMGMLVGLGVWQVIYLRAYFRSKHLI.

Residues 1 to 25 (MGSSRLAMRSALGLFFLLFVQISLA) form the signal peptide. Over 26–185 (LKFDIAAGKG…TNESTNERVK (160 aa)) the chain is Lumenal. Positions 36–126 (ERCIRNFVLK…HRSIELDVDI (91 aa)) constitute a GOLD domain. The chain crosses the membrane as a helical span at residues 186-206 (WFAFGTMGMLVGLGVWQVIYL). Residues 207 to 216 (RAYFRSKHLI) are Cytoplasmic-facing.

This sequence belongs to the EMP24/GP25L family.

It localises to the endoplasmic reticulum membrane. Its subcellular location is the golgi apparatus membrane. Constituent of COPII-coated endoplasmic reticulum-derived transport vesicles. Required for efficient transport of a subset of secretory proteins to the Golgi. Facilitates retrograde transport from the Golgi to the endoplasmic reticulum. This Emericella nidulans (strain FGSC A4 / ATCC 38163 / CBS 112.46 / NRRL 194 / M139) (Aspergillus nidulans) protein is Endoplasmic reticulum vesicle protein 25 (erv25).